Consider the following 42-residue polypeptide: Cytochrome b6-f complex subunit 7 (42 aa).

A helical membrane pass occupies residues 19-37 (AVVCFSMTLFGLSLGFGLL).

It belongs to the PetM family. In terms of assembly, the 4 large subunits of the cytochrome b6-f complex are cytochrome b6, subunit IV (17 kDa polypeptide, PetD), cytochrome f and the Rieske protein, while the 4 small subunits are PetG, PetL, PetM and PetN. The complex functions as a dimer.

The protein localises to the plastid. Its subcellular location is the chloroplast thylakoid membrane. Component of the cytochrome b6-f complex, which mediates electron transfer between photosystem II (PSII) and photosystem I (PSI), cyclic electron flow around PSI, and state transitions. The sequence is that of Cytochrome b6-f complex subunit 7 from Phaeodactylum tricornutum (strain CCAP 1055/1).